We begin with the raw amino-acid sequence, 195 residues long: Putative inactive carbonic anhydrase 5B-like protein (195 aa).

121–122 is a binding site for substrate; the sequence is TT.

Belongs to the alpha-carbonic anhydrase family.

In Homo sapiens (Human), this protein is Putative inactive carbonic anhydrase 5B-like protein (CA5BP1).